The following is a 554-amino-acid chain: Terpene synthase 17 (554 aa).

Residues Asp306, Asp310, and Glu458 each contribute to the Mg(2+) site. The DDXXD motif signature appears at 306 to 310 (DDTYD).

The protein belongs to the terpene synthase family. Tpsa subfamily. The cofactor is Mg(2+). Mn(2+) serves as cofactor. In terms of tissue distribution, mostly expressed in stem and trichomes, to a lower extent in leaves, flowers and roots and, at low levels, in fruits.

The enzyme catalyses (2Z,6Z)-farnesyl diphosphate = beta-bisabolene + diphosphate. The catalysed reaction is (2E,6E)-farnesyl diphosphate = (+)-valencene + diphosphate. It catalyses the reaction (2E,6E)-farnesyl diphosphate = (E)-beta-farnesene + diphosphate. It carries out the reaction (2E,6E)-farnesyl diphosphate = gamma-gurjunene + diphosphate. The enzyme catalyses (2Z,6Z)-farnesyl diphosphate = (E)-gamma-bisabolene + diphosphate. The catalysed reaction is (2E)-geranyl diphosphate = limonene + diphosphate. It catalyses the reaction (2E)-geranyl diphosphate = beta-myrcene + diphosphate. It carries out the reaction (2E)-geranyl diphosphate = (E)-beta-ocimene + diphosphate. The enzyme catalyses (2E)-geranyl diphosphate = terpinolene + diphosphate. The catalysed reaction is (2E)-geranyl diphosphate = gamma-terpinene + diphosphate. It catalyses the reaction (2Z,6Z)-farnesyl diphosphate = (Z)-gamma-bisabolene + diphosphate. It carries out the reaction (2E,6E)-farnesyl diphosphate = (1S,5S,6R)-alpha-bergamotene + diphosphate. The enzyme catalyses (2Z,6Z)-farnesyl diphosphate = (1S,5S,6S)-alpha-bergamotene + diphosphate. It participates in secondary metabolite biosynthesis; terpenoid biosynthesis. Its function is as follows. Sesquiterpene synthase involved in the biosynthesis of volatile compounds. Mediates the conversion of (2E,6E)-farnesyl diphosphate (FPP) into gamma-gurjunene, (E)-beta-farnesene and (+)-valencene, and of (2Z,6Z)-farnesyl diphosphate ((ZZ)-FPP) into (E)-alpha-bergamotene and (Z)-gamma-bisabolene as well as beta-bisabolene, (Z)-alpha-bergamotene and (E)-gamma-bisabolene to a lower extent. Can act with a low efficiency as a monoterpene synthase with geranyl diphosphate (GPP) as substrate, thus producing beta-myrcene, (E)-beta-ocimene, limonene, terpinolene, gamma-terpinene and (Z)-beta-ocimene. The protein is Terpene synthase 17 of Solanum lycopersicum (Tomato).